A 689-amino-acid chain; its full sequence is Protein asunder (689 aa).

Residues 521-550 are a coiled coil; that stretch reads NGARLKLSKAKDQYRLLYRELEQLIQLNAT. Disordered stretches follow at residues 592 to 619 and 665 to 689; these read PERLEPISSVGASGSSSSNSLLKASKRR and GTKDKDTVTTGASITPNVKEESVRS. A compositionally biased stretch (low complexity) spans 599–614; it reads SSVGASGSSSSNSLLK. The short motif at 613 to 619 is the Nuclear localization signal (NLS) element; the sequence is LKASKRR.

It belongs to the Integrator subunit 13 family. In terms of assembly, belongs to the multiprotein complex Integrator, at least composed of IntS1, IntS2, IntS3, IntS4, omd/IntS5, IntS6, defl/IntS7, IntS8, IntS9, IntS10, IntS11, IntS12, asun/IntS13, IntS14 and IntS15. The core complex associates with protein phosphatase 2A subunits mts/PP2A and Pp2A-29B, to form the Integrator-PP2A (INTAC) complex. In terms of processing, phosphorylated. Expressed in nurse cells at stages 9-10 of oogenesis and exported to the oocyte. Also expressed in the follicle cells surrounding the oocyte.

Its subcellular location is the nucleus. It is found in the cytoplasm. The protein resides in the perinuclear region. In terms of biological role, component of the integrator complex, a multiprotein complex that terminates RNA polymerase II (Pol II) transcription in the promoter-proximal region of genes. The integrator complex provides a quality checkpoint during transcription elongation by driving premature transcription termination of transcripts that are unfavorably configured for transcriptional elongation: the complex terminates transcription by (1) catalyzing dephosphorylation of the C-terminal domain (CTD) of Pol II subunit Polr2A/Rbp1 and Spt5, and (2) degrading the exiting nascent RNA transcript via endonuclease activity. The integrator complex is also involved in the 3'-end processing of the U7 snRNA, and also the spliceosomal snRNAs U1, U2, U4 and U5. Plays a role as a regulator of spermatogenesis. Crucial regulator of the mitotic cell cycle and development. Required for the correct dynein-dynactin perinuclear localization important for nucleus-centrosome coupling that occur upon meiotic progression of primary spermatocytes. Plays a role in sperm motility and fertility. May have a role in the PNG/PLU/GNU pathway. In Drosophila melanogaster (Fruit fly), this protein is Protein asunder.